Here is a 270-residue protein sequence, read N- to C-terminus: UPF0162 protein VC_2176 (270 aa).

The protein belongs to the UPF0162 family.

This Vibrio cholerae serotype O1 (strain ATCC 39315 / El Tor Inaba N16961) protein is UPF0162 protein VC_2176.